The chain runs to 103 residues: Histone H4, major (103 aa).

Gly residues predominate over residues 1 to 12 (MAGGKGGKGMGK). Residues 1–29 (MAGGKGGKGMGKVGAKRHSKRSNKASIEG) form a disordered region. Residues K5, K8, K12, and K16 each carry the N6-acetyllysine modification. Over residues 14–23 (GAKRHSKRSN) the composition is skewed to basic residues. A DNA-binding region spans residues 16–21 (KRHSKR).

Belongs to the histone H4 family. In terms of assembly, the nucleosome is a histone octamer containing two molecules each of H2A, H2B, H3 and H4 assembled in one H3-H4 heterotetramer and two H2A-H2B heterodimers. The octamer wraps approximately 147 bp of DNA.

Its subcellular location is the nucleus. It is found in the chromosome. Core component of nucleosome. Nucleosomes wrap and compact DNA into chromatin, limiting DNA accessibility to the cellular machineries which require DNA as a template. Histones thereby play a central role in transcription regulation, DNA repair, DNA replication and chromosomal stability. DNA accessibility is regulated via a complex set of post-translational modifications of histones, also called histone code, and nucleosome remodeling. In Tetrahymena pyriformis, this protein is Histone H4, major.